The sequence spans 269 residues: Undecaprenyl-diphosphatase (269 aa).

The next 8 helical transmembrane spans lie at 1–21, 39–59, 86–106, 112–132, 144–164, 184–204, 210–230, and 249–269; these read MSIF…FLPI, LPIL…CTVF, LMMI…GLLL, TIDI…LIAS, VTLL…IPGI, AGEF…ILEI, LLAG…FVVG, and FAFY…GFAG.

This sequence belongs to the UppP family.

The protein resides in the cell inner membrane. It catalyses the reaction di-trans,octa-cis-undecaprenyl diphosphate + H2O = di-trans,octa-cis-undecaprenyl phosphate + phosphate + H(+). Functionally, catalyzes the dephosphorylation of undecaprenyl diphosphate (UPP). Confers resistance to bacitracin. This chain is Undecaprenyl-diphosphatase, found in Treponema denticola (strain ATCC 35405 / DSM 14222 / CIP 103919 / JCM 8153 / KCTC 15104).